The sequence spans 576 residues: Zinc finger protein 791 (576 aa).

The KRAB domain maps to 4 to 90; the sequence is VAFEDVSVSF…AENFSPNLSV (87 aa). 17 C2H2-type zinc fingers span residues 100-122, 132-154, 160-182, 188-210, 216-238, 244-266, 272-294, 300-322, 328-350, 356-378, 384-406, 412-434, 440-462, 468-490, 496-518, 524-546, and 552-574; these read YECT…MRSH, YKCK…ERSH, YKCK…ERTH, YECK…ERIH, YECK…ERTH, YACK…MITH, YKCK…ERIH, YKCK…VRVH, YECK…KRNH, YECK…MITH, YKCR…ERTH, YECK…KRTH, YECK…MRMH, YKCK…TRIH, and LECK…MRMH.

It belongs to the krueppel C2H2-type zinc-finger protein family.

It is found in the nucleus. Functionally, may be involved in transcriptional regulation. The chain is Zinc finger protein 791 (ZNF791) from Homo sapiens (Human).